The following is a 48-amino-acid chain: Sperm protamine P1 (48 aa).

This sequence belongs to the protamine P1 family. As to expression, testis.

It is found in the nucleus. The protein resides in the chromosome. In terms of biological role, protamines substitute for histones in the chromatin of sperm during the haploid phase of spermatogenesis. They compact sperm DNA into a highly condensed, stable and inactive complex. The polypeptide is Sperm protamine P1 (PRM1) (Eptesicus fuscus (Big brown bat)).